Consider the following 314-residue polypeptide: Olfactory receptor 5B12 (314 aa).

Residues 1–23 (MENNTEVTEFILVGLTDDPELQI) are Extracellular-facing. N-linked (GlcNAc...) asparagine glycosylation is present at asparagine 3. The chain crosses the membrane as a helical span at residues 24–44 (PLFIVFLFIYLITLVGNLGMI). Residues 45 to 52 (ELILLDSC) are Cytoplasmic-facing. Residues 53-73 (LHTPMYFFLSNLSLVDFGYSS) traverse the membrane as a helical segment. Over 74–97 (AVTPKVMVGFLTGDKFILYNACAT) the chain is Extracellular. Cysteine 95 and cysteine 187 are oxidised to a cystine. The chain crosses the membrane as a helical span at residues 98-118 (QFFFFVAFITAESFLLASMAY). Topologically, residues 119 to 137 (DRYAALCKPLHYTTTMTTN) are cytoplasmic. A helical membrane pass occupies residues 138–158 (VCACLAIGSYICGFLNASIHT). Residues 159 to 194 (GNTFRLSFCRSNVVEHFFCDAPPLLTLSCSDNYISE) lie on the Extracellular side of the membrane. The helical transmembrane segment at 195–215 (MVIFFVVGFNDLFSILVILIS) threads the bilayer. The Cytoplasmic portion of the chain corresponds to 216 to 235 (YLFIFITIMKMRSPEGRQKA). Residues 236–256 (FSTCASHLTAVSIFYGTGIFM) form a helical membrane-spanning segment. The Extracellular portion of the chain corresponds to 257–269 (YLRPNSSHFMGTD). An N-linked (GlcNAc...) asparagine glycan is attached at asparagine 261. The chain crosses the membrane as a helical span at residues 270–290 (KMASVFYAIVIPMLNPLVYSL). Residues 291–314 (RNKEVKSAFKKTVGKAKASIGFIF) lie on the Cytoplasmic side of the membrane.

Belongs to the G-protein coupled receptor 1 family.

The protein resides in the cell membrane. Its function is as follows. Odorant receptor. The sequence is that of Olfactory receptor 5B12 (OR5B12) from Homo sapiens (Human).